Consider the following 228-residue polypeptide: ATP synthase subunit a (228 aa).

A run of 6 helical transmembrane segments spans residues Tyr-14–Phe-34, Trp-71–Leu-91, Ile-101–Tyr-121, Phe-139–Leu-159, Ala-165–Met-185, and Val-188–Val-208.

Belongs to the ATPase A chain family. In terms of assembly, F-type ATPases have 2 components, CF(1) - the catalytic core - and CF(0) - the membrane proton channel. CF(1) has five subunits: alpha(3), beta(3), gamma(1), delta(1), epsilon(1). CF(0) has three main subunits: a, b and c.

The protein resides in the mitochondrion inner membrane. Its function is as follows. Mitochondrial membrane ATP synthase (F(1)F(0) ATP synthase or Complex V) produces ATP from ADP in the presence of a proton gradient across the membrane which is generated by electron transport complexes of the respiratory chain. F-type ATPases consist of two structural domains, F(1) - containing the extramembraneous catalytic core and F(0) - containing the membrane proton channel, linked together by a central stalk and a peripheral stalk. During catalysis, ATP synthesis in the catalytic domain of F(1) is coupled via a rotary mechanism of the central stalk subunits to proton translocation. Key component of the proton channel; it may play a direct role in the translocation of protons across the membrane. This Pisaster ochraceus (Ochre sea star) protein is ATP synthase subunit a (ATP6).